Consider the following 997-residue polypeptide: Mannuronan C5-epimerase AlgE2 (997 aa).

7 PbH1 repeats span residues 133-155 (DRDV…DPHE), 157-179 (TINL…VADF), 180-202 (QIGG…NIVT), 204-226 (TNDF…VVQR), 257-279 (AHDV…RVYG), 280-315 (AEDV…GVSG), and 320-359 (TTGT…SVSN). Hemolysin-type calcium-binding repeat units follow at residues 388–403 (GTAG…AHET), 406–422 (GLDG…NDIL), 424–439 (GGAG…GADL), 557–573 (GHAG…DDIL), 574–591 (VGGA…ADVF), 696–711 (GSAG…ADEV), 713–730 (HGGG…ADVF), 828–839 (GGDGNDTLSGSS), 846–862 (GGVG…NDIL), and 864–880 (GGAG…SDIF).

The protein belongs to the D-mannuronate C5-epimerase family. Ca(2+) serves as cofactor.

It is found in the secreted. The catalysed reaction is [(1-&gt;4)-beta-D-mannuronosyl](n) = [alginate](n). It functions in the pathway glycan biosynthesis; alginate biosynthesis. Its activity is regulated as follows. Inhibited by zinc. Its function is as follows. Converts beta-D-mannuronic acid (M) to alpha-L-guluronic acid (G), producing a polymer with gel-forming capacity, required for the formation of the cyst coat. The sequence is that of Mannuronan C5-epimerase AlgE2 from Azotobacter vinelandii.